A 738-amino-acid polypeptide reads, in one-letter code: Nucleoprotein (738 aa).

Positions 334 to 363 (VNVGEQYQQLREAATEAEKQLQQYAETREL) form a coiled coil. The disordered stretch occupies residues 418-640 (GDRYPDDNDI…QGSESEALPI (223 aa)). Acidic residues predominate over residues 461–476 (PYDDESNNYPDYEDSA). Residues 544-564 (PGSNTNQPQGNMSSTLQSMTP) show a composition bias toward polar residues. The segment covering 567–594 (EESEPDDQKDDDDESLTSLDSEGDEDVE) has biased composition (acidic residues). Residues 616-625 (VDTNQQNGPS) show a composition bias toward polar residues.

It belongs to the filoviruses nucleoprotein family. As to quaternary structure, homooligomer. Homomultimerizes to form the nucleocapsid. Binds to viral genomic RNA. Interacts with VP35 and VP30 to form the nucleocapsid. Interacts with host PPP2R5C; this interaction leads to VP30 dephosphorylation and viral transcription. Interacts with VP24; this interaction facilitates nucleocapsid assembly and genome packaging. Interacts with matrix protein VP40; this interaction allows recruitment of the nucleocapsid into progeny virions. Interacts with host STAU1. Interacts with host NXF1 (via RNA-binding domain); this interaction recruits NXF1 to the inclusion bodies were viral replication takes place, probably to export viral mRNA-NXF1 complexes from these sites. Interacts with host CCDC92; this interaction sequesters NP in the host cytoplasm. Interacts with host TRIM14. Phosphorylated and O-glycosylated by host. Acetylated by host EP300 in vitro.

It localises to the virion. Its subcellular location is the host cytoplasm. Oligomerizes into helical capsid to encapsidate the viral genome, protecting it from nucleases and the cellular innate immune response. VP35 binds to and stabilizes monomeric NP, keeping it soluble. Upon virus replication, NP is recruited to bind cooperatively viral genomic RNA and VP35 is released. The encapsidated genomic RNA is termed the nucleocapsid and serves as template for transcription and replication. The nucleocapsid is helical with a pitch of 10.81 NP per turn and a diameter of about 22nm. Each NP binds to six nucleotides of viral genomic RNA, three being exposed to the solvant and three hidden into the nucleocapsid. Also recruits host PPP2R5C phosphatase to dephosphorylate VP30 and thereby promote viral transcription. Upon virion assembly and budding, NP binds to VP24 and possibly host STAU1. The sequence is that of Nucleoprotein (NP) from Sudan ebolavirus (strain Human/Uganda/Gulu/2000) (SEBOV).